A 215-amino-acid chain; its full sequence is Cytochrome b6 (215 aa).

The chain crosses the membrane as a helical span at residues 32 to 52; sequence IFYCLGGITLTCFLVQVATGF. Cysteine 35 is a heme c binding site. Residues histidine 86 and histidine 100 each coordinate heme b. 3 helical membrane passes run 90-110, 116-136, and 186-206; these read ASMM…TGGF, LTWV…VTGY, and LHTF…FPMI. Positions 187 and 202 each coordinate heme b.

It belongs to the cytochrome b family. PetB subfamily. The 4 large subunits of the cytochrome b6-f complex are cytochrome b6, subunit IV (17 kDa polypeptide, PetD), cytochrome f and the Rieske protein, while the 4 small subunits are PetG, PetL, PetM and PetN. The complex functions as a dimer. The cofactor is heme b. Heme c is required as a cofactor.

Its subcellular location is the plastid. The protein localises to the chloroplast thylakoid membrane. Component of the cytochrome b6-f complex, which mediates electron transfer between photosystem II (PSII) and photosystem I (PSI), cyclic electron flow around PSI, and state transitions. The sequence is that of Cytochrome b6 from Solanum bulbocastanum (Wild potato).